Reading from the N-terminus, the 96-residue chain is Aspartyl/glutamyl-tRNA(Asn/Gln) amidotransferase subunit C (96 aa).

This sequence belongs to the GatC family. Heterotrimer of A, B and C subunits.

The catalysed reaction is L-glutamyl-tRNA(Gln) + L-glutamine + ATP + H2O = L-glutaminyl-tRNA(Gln) + L-glutamate + ADP + phosphate + H(+). It carries out the reaction L-aspartyl-tRNA(Asn) + L-glutamine + ATP + H2O = L-asparaginyl-tRNA(Asn) + L-glutamate + ADP + phosphate + 2 H(+). Allows the formation of correctly charged Asn-tRNA(Asn) or Gln-tRNA(Gln) through the transamidation of misacylated Asp-tRNA(Asn) or Glu-tRNA(Gln) in organisms which lack either or both of asparaginyl-tRNA or glutaminyl-tRNA synthetases. The reaction takes place in the presence of glutamine and ATP through an activated phospho-Asp-tRNA(Asn) or phospho-Glu-tRNA(Gln). The chain is Aspartyl/glutamyl-tRNA(Asn/Gln) amidotransferase subunit C from Deinococcus deserti (strain DSM 17065 / CIP 109153 / LMG 22923 / VCD115).